The chain runs to 584 residues: 2-succinyl-5-enolpyruvyl-6-hydroxy-3-cyclohexene-1-carboxylate synthase (584 aa).

Belongs to the TPP enzyme family. MenD subfamily. Homodimer. Requires Mg(2+) as cofactor. Mn(2+) is required as a cofactor. The cofactor is thiamine diphosphate.

The catalysed reaction is isochorismate + 2-oxoglutarate + H(+) = 5-enolpyruvoyl-6-hydroxy-2-succinyl-cyclohex-3-ene-1-carboxylate + CO2. The protein operates within quinol/quinone metabolism; 1,4-dihydroxy-2-naphthoate biosynthesis; 1,4-dihydroxy-2-naphthoate from chorismate: step 2/7. It functions in the pathway quinol/quinone metabolism; menaquinone biosynthesis. Catalyzes the thiamine diphosphate-dependent decarboxylation of 2-oxoglutarate and the subsequent addition of the resulting succinic semialdehyde-thiamine pyrophosphate anion to isochorismate to yield 2-succinyl-5-enolpyruvyl-6-hydroxy-3-cyclohexene-1-carboxylate (SEPHCHC). This is 2-succinyl-5-enolpyruvyl-6-hydroxy-3-cyclohexene-1-carboxylate synthase from Bacillus cereus (strain ATCC 10987 / NRS 248).